Reading from the N-terminus, the 848-residue chain is Protein SEY1 (848 aa).

At 1–733 the chain is on the cytoplasmic side; sequence MNGNFAAVGS…KRGALGGMTQ (733 aa). In terms of domain architecture, GB1/RHD3-type G spans 47–277; it reads GFNYHLISVF…FVGGVFLPEY (231 aa). 57–64 lines the GTP pocket; the sequence is GSQSTGKS. Residues 734–754 traverse the membrane as a helical segment; sequence VPLYFWIALFAFGWNEIWMVI. At 755–757 the chain is on the lumenal side; sequence RNP. Residues 758–778 form a helical membrane-spanning segment; sequence FLFILLLLSAGGTYVAYNLSL. Residues 779–848 are Cytoplasmic-facing; that stretch reads LGPMMQMTNA…KKKDYDDDGI (70 aa). The disordered stretch occupies residues 815–848; sequence LAMPASSKSSGGEQVRMDTLDSKGKKKDYDDDGI. The span at 829–848 shows a compositional bias: basic and acidic residues; the sequence is VRMDTLDSKGKKKDYDDDGI.

It belongs to the TRAFAC class dynamin-like GTPase superfamily. GB1/RHD3 GTPase family. RHD3 subfamily.

It is found in the endoplasmic reticulum membrane. Its function is as follows. Cooperates with the reticulon proteins and tubule-shaping DP1 family proteins to generate and maintain the structure of the tubular endoplasmic reticulum network. Has GTPase activity, which is required for its function in ER organization. This is Protein SEY1 from Pyricularia oryzae (strain 70-15 / ATCC MYA-4617 / FGSC 8958) (Rice blast fungus).